We begin with the raw amino-acid sequence, 357 residues long: D-alanine--D-alanine ligase (357 aa).

The region spanning Lys-145 to Asn-339 is the ATP-grasp domain. Residue Pro-172–Ser-225 coordinates ATP. Mg(2+) contacts are provided by Asp-294, Glu-306, and Asn-308.

Belongs to the D-alanine--D-alanine ligase family. It depends on Mg(2+) as a cofactor. Requires Mn(2+) as cofactor.

Its subcellular location is the cytoplasm. The enzyme catalyses 2 D-alanine + ATP = D-alanyl-D-alanine + ADP + phosphate + H(+). It participates in cell wall biogenesis; peptidoglycan biosynthesis. Cell wall formation. This Lacticaseibacillus paracasei (strain ATCC 334 / BCRC 17002 / CCUG 31169 / CIP 107868 / KCTC 3260 / NRRL B-441) (Lactobacillus paracasei) protein is D-alanine--D-alanine ligase.